The following is an 81-amino-acid chain: MSAAEIKDKVYDIIVSKMGVNKDQIKPESKFADDLGADSLDTVELIMELENEFGVQIPDEDAEKIGTVQQAIDYIVNKKVS.

Residues 4-79 form the Carrier domain; it reads AEIKDKVYDI…QAIDYIVNKK (76 aa). Serine 39 bears the O-(pantetheine 4'-phosphoryl)serine mark.

It belongs to the acyl carrier protein (ACP) family. 4'-phosphopantetheine is transferred from CoA to a specific serine of apo-ACP by AcpS. This modification is essential for activity because fatty acids are bound in thioester linkage to the sulfhydryl of the prosthetic group.

The protein localises to the cytoplasm. The protein operates within lipid metabolism; fatty acid biosynthesis. Carrier of the growing fatty acid chain in fatty acid biosynthesis. In Chlorobaculum tepidum (strain ATCC 49652 / DSM 12025 / NBRC 103806 / TLS) (Chlorobium tepidum), this protein is Acyl carrier protein.